We begin with the raw amino-acid sequence, 795 residues long: MKRLRTPSSSDSSDNESPSTSFSSNKYGSKPGTPASAQKKPAEVFRKDLISAMKLPDSHHISSEDYYLLADTWKQEWEKGVQVLASPDTIPQPSVRIITEKPKEVLFSKPRKYIQCWSQDSTETGYVNIKELAEAMCRYDLDDMDLYWLQQLNAELGMMGDGVVDELTMERVMEALERQCHENMNHAIETEEGLGIEYDEDVICDVCRSPDSEEGNDMVFCDKCNICVHQACYGIVKVPDGNWLCRTCVLGITPQCLLCPKTGGAMKATRAGTKWAHVSCALWIPEVSIACPERMEPITKVSHIPPSRWSLICSLCKLKTGACIQCSVKNCTIPFHVTCAFEHSLEMKTILDEGDEVKFKSYCLKHSKPKAGEPGLSPARHKPPTETDKLSLRAQKLQELEEEFYTYVHPEEVAHDLSLPLHLLDFIFQYWKMKRKSNFNKALLPPKEDEENLLLQPQEDSIHTRMRMFMHLRQDLERVRNLCYMVSRREKLKLSQSKAQEQIFNLHVKLVNQELSAGLPVSSSIENLLFHPPPRITLKLKMPKVQLGNGKSSSKSGNGPLCPDNSCNLYDTSEGGIGQGKPQLHLGRQRIEERINGILPASIYIRRDGGTPPLAVKQSGKPLALHAALHGQSSNGKTKNEAEKSRQIKSNGILDKPILQRDTSCLAASEKDPRSEISGKSQSSGFHKTSLEHFSRSLKEATVSLVRTEDLRTFEKNSRKSSGFSKPLSTERPQGGGRASQESDGYCPDAELSDSEPEAKGKCRQGGRTQNQRGDYVKSASRAKHSYGSRTSVQR.

Over residues Met-1 to Asn-25 the composition is skewed to low complexity. The tract at residues Met-1–Pro-41 is disordered. The PHD-type 1 zinc-finger motif lies at Asp-201–Gly-251. The C2HC pre-PHD-type zinc-finger motif lies at Thr-253 to Val-287. Residues Leu-311–Ser-367 form a PHD-type 2 zinc finger. 3 disordered regions span residues His-630 to Leu-654, Ala-667 to His-687, and Phe-714 to Arg-795. Polar residues-rich tracts occupy residues Ser-678 to His-687 and Lys-720 to Arg-732.

The protein belongs to the JADE family. In terms of assembly, component of the HBO1 complex.

Functionally, scaffold subunit of some HBO1 complexes, which have a histone H4 acetyltransferase activity. The protein is Protein Jade-3 (jade3) of Danio rerio (Zebrafish).